A 914-amino-acid chain; its full sequence is Translation initiation factor IF-2 (914 aa).

The segment at 58–160 (KTEKKQTAKK…EAEPKIEVMP (103 aa)) is disordered. A compositionally biased stretch (basic and acidic residues) spans 70-91 (KKDTVKKDTVKKTAVKKDDSKA). A compositionally biased stretch (basic residues) spans 92–103 (AKKTKPIAKKSA). Residues 104–160 (PKTEKKVEKKVESKISKPDNEILEAKPEISKPEIKAEPKKEEIEQKQEAEPKIEVMP) show a composition bias toward basic and acidic residues. The tr-type G domain maps to 413 to 582 (ERVPVITIMG…LLQADLLELK (170 aa)). A G1 region spans residues 422–429 (GHVDHGKT). 422 to 429 (GHVDHGKT) serves as a coordination point for GTP. Residues 447–451 (GITQH) form a G2 region. Positions 468–471 (DTPG) are G3. Residues 468–472 (DTPGH) and 522–525 (NKMD) contribute to the GTP site. The segment at 522 to 525 (NKMD) is G4. The segment at 558–560 (SAK) is G5.

Belongs to the TRAFAC class translation factor GTPase superfamily. Classic translation factor GTPase family. IF-2 subfamily.

It localises to the cytoplasm. In terms of biological role, one of the essential components for the initiation of protein synthesis. Protects formylmethionyl-tRNA from spontaneous hydrolysis and promotes its binding to the 30S ribosomal subunits. Also involved in the hydrolysis of GTP during the formation of the 70S ribosomal complex. The sequence is that of Translation initiation factor IF-2 from Campylobacter hominis (strain ATCC BAA-381 / DSM 21671 / CCUG 45161 / LMG 19568 / NCTC 13146 / CH001A).